A 92-amino-acid polypeptide reads, in one-letter code: Long neurotoxin 77 (92 aa).

The signal sequence occupies residues 1–21 (MKTLLLTLVVVTIVCLDLGDS). 5 cysteine pairs are disulfide-bonded: cysteine 24-cysteine 41, cysteine 34-cysteine 62, cysteine 47-cysteine 51, cysteine 66-cysteine 77, and cysteine 78-cysteine 83.

Belongs to the three-finger toxin family. Long-chain subfamily. Type II alpha-neurotoxin sub-subfamily. Expressed by the venom gland.

The protein localises to the secreted. Functionally, binds with high affinity to muscular (alpha-1/CHRNA1) and neuronal (alpha-7/CHRNA7) nicotinic acetylcholine receptor (nAChR) and inhibits acetylcholine from binding to the receptor, thereby impairing neuromuscular and neuronal transmission. This chain is Long neurotoxin 77, found in Drysdalia coronoides (White-lipped snake).